The sequence spans 293 residues: ESX-3 secretion-associated protein EspG3 (293 aa).

It belongs to the EspG family.

Its subcellular location is the cytoplasm. The polypeptide is ESX-3 secretion-associated protein EspG3 (Mycolicibacterium smegmatis (strain ATCC 700084 / mc(2)155) (Mycobacterium smegmatis)).